Consider the following 90-residue polypeptide: MENRRQGMVVYLHSLKQSKMLRKFGNVHYVSKRLKYVVLYCDMDQIEKTMDKIASYSFVKKVEPSYKPFLKLEFESKLDKAKEYDYKIGI.

Belongs to the UPF0298 family.

Its subcellular location is the cytoplasm. The sequence is that of UPF0298 protein YlbG (ylbG) from Bacillus subtilis (strain 168).